The primary structure comprises 158 residues: C-type lectin lectoxin-Thr1 (158 aa).

Positions 1 to 23 (MGRFIFATLGLLLVAFSINGAKG) are cleaved as a signal peptide. Disulfide bonds link Cys26–Cys37, Cys54–Cys154, and Cys129–Cys146. The region spanning 33 to 155 (LKGFCYKVFN…CASTRAYLCK (123 aa)) is the C-type lectin domain. Positions 119-121 (EPN) match the Mannose-binding motif. 3 residues coordinate Ca(2+): Glu127, Asn142, and Asp143.

This sequence belongs to the true venom lectin family. In terms of tissue distribution, expressed by the venom gland.

The protein localises to the secreted. Functionally, mannose-binding lectin which recognizes specific carbohydrate structures and agglutinates a variety of animal cells by binding to cell-surface glycoproteins and glycolipids. May be a calcium-dependent lectin. The polypeptide is C-type lectin lectoxin-Thr1 (Thrasops jacksonii (Jackson's black tree snake)).